Here is a 273-residue protein sequence, read N- to C-terminus: MMKRQFEDVTRIVIKIGTSSLVLPTGKINLEKIDQLAFVISSLMNKGKEVILVSSGAMGFGLDILKMEKRPTNLAKQQAVSSVGQVAMMSLYSQIFAHYQTNVSQILLTRDVVVFPESLANVTNAFESLISLGIVPIVNENDAVSVDEMDHATKFGDNDRLSAVVAGITKADLLIMLSDIDGLFDKNPTIYEDAQLRSHVAVITQEIIASAGGAGSKFGTGGMLSKIQSAQMVFENKGQMVLMNGANPRDILRVLEGQPLGTWFKQIEEVRHD.

Position 15 (Lys15) interacts with ATP. Ser55, Asp142, and Asn158 together coordinate substrate. ATP is bound by residues 178–179 (SD) and 220–226 (TGGMLSK).

The protein belongs to the glutamate 5-kinase family.

Its subcellular location is the cytoplasm. The enzyme catalyses L-glutamate + ATP = L-glutamyl 5-phosphate + ADP. Its pathway is amino-acid biosynthesis; L-proline biosynthesis; L-glutamate 5-semialdehyde from L-glutamate: step 1/2. Catalyzes the transfer of a phosphate group to glutamate to form L-glutamate 5-phosphate. The sequence is that of Glutamate 5-kinase from Streptococcus pyogenes serotype M4 (strain MGAS10750).